We begin with the raw amino-acid sequence, 388 residues long: Succinate--CoA ligase [ADP-forming] subunit beta (388 aa).

The ATP-grasp domain occupies 9–244; sequence KQLFAEFGLP…PSQEDEREAH (236 aa). ATP-binding positions include Lys-46, 53–55, Glu-99, Ser-102, and Glu-107; that span reads GRG. Asn-199 and Asp-213 together coordinate Mg(2+). Residues Asn-264 and 321-323 contribute to the substrate site; that span reads GIV.

It belongs to the succinate/malate CoA ligase beta subunit family. Heterotetramer of two alpha and two beta subunits. Requires Mg(2+) as cofactor.

It catalyses the reaction succinate + ATP + CoA = succinyl-CoA + ADP + phosphate. The catalysed reaction is GTP + succinate + CoA = succinyl-CoA + GDP + phosphate. It participates in carbohydrate metabolism; tricarboxylic acid cycle; succinate from succinyl-CoA (ligase route): step 1/1. Functionally, succinyl-CoA synthetase functions in the citric acid cycle (TCA), coupling the hydrolysis of succinyl-CoA to the synthesis of either ATP or GTP and thus represents the only step of substrate-level phosphorylation in the TCA. The beta subunit provides nucleotide specificity of the enzyme and binds the substrate succinate, while the binding sites for coenzyme A and phosphate are found in the alpha subunit. The protein is Succinate--CoA ligase [ADP-forming] subunit beta of Vibrio parahaemolyticus serotype O3:K6 (strain RIMD 2210633).